We begin with the raw amino-acid sequence, 845 residues long: SLIT and NTRK-like protein 2 (845 aa).

Positions 1–21 are cleaved as a signal peptide; that stretch reads MLSGVWFLSVLTVAGILQTES. The Extracellular segment spans residues 22 to 621; it reads RKTAKDICKI…LHTEVPLSVL (600 aa). 2 disulfides stabilise this stretch: Cys-29–Cys-35 and Cys-33–Cys-46. LRR repeat units lie at residues 63 to 84, 87 to 108, 111 to 132, 135 to 156, 159 to 180, and 182 to 203; these read RIYQLFLNGNLLTRLYPNEFVN, NAVTLHLGNNGLQEIRTGAFSG, TLKRLHLNNNKLEILREDTFLG, SLEYLQADYNYISAIEAGAFSK, KLKVLILNDNLLLSLPSNVFRF, and LLTHLDLRGNRLKVMPFAGVLE. Residue Asn-84 is glycosylated (N-linked (GlcNAc...) asparagine). A required for interaction with PTPRD region spans residues 167 to 215; sequence DNLLLSLPSNVFRFVLLTHLDLRGNRLKVMPFAGVLEHIGGIMEIQLEE. The 50-residue stretch at 216–265 folds into the LRRCT 1 domain; it reads NPWNCTCDLLPLKAWLDTITVFVGEIVCETPFRLHGKDVTQLTRQDLCPR. 2 disulfide bridges follow: Cys-220-Cys-243 and Cys-222-Cys-263. The interval 263–321 is disordered; it reads CPRKSASDSSQRGSHADTHVQRLSPTMNPALNPTRAPKASRPPKMRNRPTPRVTVSKDR. Polar residues predominate over residues 283–293; it reads QRLSPTMNPAL. The LRRNT domain occupies 331–373; it reads QTKSPVPLTCPSSCVCTSQSSDNGLNVNCQERKFTNISDLQPK. LRR repeat units lie at residues 376-397, 400-421, 424-445, 448-469, 472-493, and 495-516; these read SPKKLYLTGNYLQTVYKNDLLE, SLDLLHLGNNRIAVIQEGAFTN, SLRRLYLNGNYLEVLYPSMFDG, SLQYLYLEYNVIKEIKPLTFDA, NLQLLFLNNNLLRSLPDNIFGG, and ALTRLNLRNNHFSHLPVKGVLD. An N-linked (GlcNAc...) asparagine glycan is attached at Asn-421. One can recognise an LRRCT 2 domain in the interval 529–580; sequence NPWDCTCDIMGLKDWTEHANSPVIINEVTCESPAKHAGEILKFLGREAICPD. A helical transmembrane segment spans residues 622 to 642; sequence ILGLLVVFILSVCFGAGLFVF. Over 643–845 the chain is Cytoplasmic; it reads VLKRRKGVPS…LEKQTAISQL (203 aa). Tyr-756 carries the post-translational modification Phosphotyrosine.

Belongs to the SLITRK family. In terms of assembly, interacts with PTPRD; this interaction is PTPRD splicing-dependent and may induce pre-synaptic differentiation. Interacts with NTRK2. In terms of tissue distribution, expressed predominantly in the cerebral cortex of the brain but also at low levels in the spinal cord and medulla. Also expressed in some astrocytic brain tumors such as astrocytomas, oligodendrogliomas, glioblastomas, gangliogliomas and primitive neuroectodermal tumors.

Its subcellular location is the membrane. It is found in the cell membrane. The protein localises to the cell projection. The protein resides in the dendrite. Functionally, it is involved in synaptogenesis and promotes excitatory synapse differentiation. Suppresses neurite outgrowth. Involved in the negative regulation of NTRK2. In Homo sapiens (Human), this protein is SLIT and NTRK-like protein 2 (SLITRK2).